The sequence spans 211 residues: FMN-dependent NADH:quinone oxidoreductase (211 aa).

FMN contacts are provided by residues 17-19, 102-105, and 146-149; these read SNS, MWNL, and SRGG.

Belongs to the azoreductase type 1 family. As to quaternary structure, homodimer. The cofactor is FMN.

The catalysed reaction is 2 a quinone + NADH + H(+) = 2 a 1,4-benzosemiquinone + NAD(+). It catalyses the reaction N,N-dimethyl-1,4-phenylenediamine + anthranilate + 2 NAD(+) = 2-(4-dimethylaminophenyl)diazenylbenzoate + 2 NADH + 2 H(+). Quinone reductase that provides resistance to thiol-specific stress caused by electrophilic quinones. Functionally, also exhibits azoreductase activity. Catalyzes the reductive cleavage of the azo bond in aromatic azo compounds to the corresponding amines. The protein is FMN-dependent NADH:quinone oxidoreductase of Macrococcus caseolyticus (strain JCSC5402) (Macrococcoides caseolyticum).